A 103-amino-acid chain; its full sequence is Large ribosomal subunit protein bL21 (103 aa).

Belongs to the bacterial ribosomal protein bL21 family. In terms of assembly, part of the 50S ribosomal subunit. Contacts protein L20.

This protein binds to 23S rRNA in the presence of protein L20. This chain is Large ribosomal subunit protein bL21, found in Herminiimonas arsenicoxydans.